A 387-amino-acid chain; its full sequence is Phosphoglycerate kinase (387 aa).

Substrate-binding positions include 21-23 (DLN), R36, 59-62 (HLGR), R113, and R146. ATP-binding positions include K197, E314, and 340 to 343 (GGDT).

It belongs to the phosphoglycerate kinase family. As to quaternary structure, monomer.

It is found in the cytoplasm. It carries out the reaction (2R)-3-phosphoglycerate + ATP = (2R)-3-phospho-glyceroyl phosphate + ADP. It participates in carbohydrate degradation; glycolysis; pyruvate from D-glyceraldehyde 3-phosphate: step 2/5. The polypeptide is Phosphoglycerate kinase (Marinomonas sp. (strain MWYL1)).